Here is a 393-residue protein sequence, read N- to C-terminus: NAD(P)H-quinone oxidoreductase subunit H, chloroplastic (393 aa).

It belongs to the complex I 49 kDa subunit family. In terms of assembly, NDH is composed of at least 16 different subunits, 5 of which are encoded in the nucleus.

It is found in the plastid. The protein localises to the chloroplast thylakoid membrane. It catalyses the reaction a plastoquinone + NADH + (n+1) H(+)(in) = a plastoquinol + NAD(+) + n H(+)(out). The enzyme catalyses a plastoquinone + NADPH + (n+1) H(+)(in) = a plastoquinol + NADP(+) + n H(+)(out). Its function is as follows. NDH shuttles electrons from NAD(P)H:plastoquinone, via FMN and iron-sulfur (Fe-S) centers, to quinones in the photosynthetic chain and possibly in a chloroplast respiratory chain. The immediate electron acceptor for the enzyme in this species is believed to be plastoquinone. Couples the redox reaction to proton translocation, and thus conserves the redox energy in a proton gradient. In Brachypodium distachyon (Purple false brome), this protein is NAD(P)H-quinone oxidoreductase subunit H, chloroplastic.